A 113-amino-acid polypeptide reads, in one-letter code: Large ribosomal subunit protein bL17 (113 aa).

Belongs to the bacterial ribosomal protein bL17 family. As to quaternary structure, part of the 50S ribosomal subunit. Contacts protein L32.

This is Large ribosomal subunit protein bL17 from Symbiobacterium thermophilum (strain DSM 24528 / JCM 14929 / IAM 14863 / T).